The chain runs to 1146 residues: Ankyrin repeat and fibronectin type-III domain-containing protein 1 (1146 aa).

2 ANK repeats span residues Gln133–Leu162 and Glu170–Pro199. In terms of domain architecture, Fibronectin type-III spans Met270–Ser366. The highly conserved peptide sequence stretch occupies residues Gly607–Lys614. 3 disordered regions span residues Asn855–Ser887, Val945–His964, and Pro1106–Leu1146. Residues Glu1131–Leu1146 are compositionally biased toward polar residues.

Functionally, may play a role in neuronal function. The sequence is that of Ankyrin repeat and fibronectin type-III domain-containing protein 1 from Homo sapiens (Human).